Reading from the N-terminus, the 507-residue chain is Transmembrane protein 184 homolog DDB_G0276041 (507 aa).

7 consecutive transmembrane segments (helical) span residues 13 to 33, 50 to 70, 88 to 108, 141 to 161, 179 to 199, 222 to 242, and 260 to 280; these read IVML…AVIL, IVRI…SLFF, AYVL…EEAL, LGLV…AAIL, LWIT…LVMF, VVFF…FDAL, and FLVC…FSYS. 6 N-linked (GlcNAc...) asparagine glycosylation sites follow: Asn-360, Asn-375, Asn-470, Asn-473, Asn-477, and Asn-498. The segment at 448-500 is disordered; sequence NGASNNNNNNNNNNNNINNNNNNNSNNSNNNSNSQFESIDINSNSVNSNKNQS. The segment covering 451 to 500 has biased composition (low complexity); that stretch reads SNNNNNNNNNNNNINNNNNNNSNNSNNNSNSQFESIDINSNSVNSNKNQS.

It belongs to the TMEM184 family.

It localises to the cell membrane. Probable transporter. The chain is Transmembrane protein 184 homolog DDB_G0276041 (tmem184B) from Dictyostelium discoideum (Social amoeba).